The following is a 314-amino-acid chain: Calcium homeostasis modulator protein 4 (314 aa).

Over 1-14 (MCPTLNNIVSSLQR) the chain is Cytoplasmic. The chain crosses the membrane as a helical span at residues 15 to 37 (NGIFINSLIAALTIGGQQLFSSS). Residues 38 to 48 (TFSCPCQVGKN) are Extracellular-facing. Cystine bridges form between C41–C131 and C43–C162. A helical transmembrane segment spans residues 49-71 (FYYGSAFLVIPALILLVAGFALR). Topologically, residues 72–103 (SQMWTITGEYCCSCAPPYRRISPLECKLACLR) are cytoplasmic. The helical transmembrane segment at 104–129 (FFSITGRAVIAPLTWLAVTLLTGTYY) threads the bilayer. The Extracellular segment spans residues 130-183 (ECAASEFASVDHYPMFDNVSASKREEILAGFPCCRSAPSDVILVRDEIALLHRY). Residues 184-207 (QSQMLGWILITLATIAALVSCCVA) form a helical membrane-spanning segment. The Cytoplasmic segment spans residues 208 to 314 (KCCSPLTSLQ…DRSRGIELKP (107 aa)).

Belongs to the CALHM family. Oligomerizes to form decameric and undecameric channels. Two hemichannels can assemble in a tail-to-tail manner to form a gap junction. Placenta.

It localises to the cell membrane. Functionally, may assemble to form gap junction channel-like structures involved in intercellular communication. Channel gating and ion conductance are likely regulated by membrane lipids rather than by membrane depolarization or extracellular calcium levels. This is Calcium homeostasis modulator protein 4 from Homo sapiens (Human).